We begin with the raw amino-acid sequence, 206 residues long: Large ribosomal subunit protein uL4 (206 aa).

This sequence belongs to the universal ribosomal protein uL4 family. In terms of assembly, part of the 50S ribosomal subunit.

In terms of biological role, one of the primary rRNA binding proteins, this protein initially binds near the 5'-end of the 23S rRNA. It is important during the early stages of 50S assembly. It makes multiple contacts with different domains of the 23S rRNA in the assembled 50S subunit and ribosome. Functionally, forms part of the polypeptide exit tunnel. This is Large ribosomal subunit protein uL4 from Paracoccus denitrificans (strain Pd 1222).